The following is a 604-amino-acid chain: Glutamine--fructose-6-phosphate aminotransferase [isomerizing] (604 aa).

Cysteine 2 functions as the Nucleophile; for GATase activity in the catalytic mechanism. Residues 2-218 enclose the Glutamine amidotransferase type-2 domain; the sequence is CGIVGVVGNR…DKELVILTKD (217 aa). SIS domains are found at residues 284–423 and 456–594; these read IITS…ANGK and VQAL…VDKP. Catalysis depends on lysine 599, which acts as the For Fru-6P isomerization activity.

In terms of assembly, homodimer.

It is found in the cytoplasm. It carries out the reaction D-fructose 6-phosphate + L-glutamine = D-glucosamine 6-phosphate + L-glutamate. Catalyzes the first step in hexosamine metabolism, converting fructose-6P into glucosamine-6P using glutamine as a nitrogen source. The protein is Glutamine--fructose-6-phosphate aminotransferase [isomerizing] of Streptococcus pyogenes serotype M18 (strain MGAS8232).